Consider the following 340-residue polypeptide: Very-long-chain 3-oxoacyl-CoA reductase (340 aa).

The helical transmembrane segment at 23 to 43 threads the bilayer; the sequence is LQYTFAALGALYVLRGALSFV. NADP(+)-binding residues include V68, R109, D123, D131, N150, K185, Y217, K221, V250, and T252. Y217 functions as the Proton donor in the catalytic mechanism. K221 serves as the catalytic Lowers pKa of active site Tyr.

It belongs to the short-chain dehydrogenases/reductases (SDR) family.

The protein localises to the endoplasmic reticulum membrane. It carries out the reaction a very-long-chain (3R)-3-hydroxyacyl-CoA + NADP(+) = a very-long-chain 3-oxoacyl-CoA + NADPH + H(+). Its pathway is lipid metabolism; fatty acid biosynthesis. Its function is as follows. Component of the microsomal membrane bound fatty acid elongation system, which produces the 26-carbon very long-chain fatty acids (VLCFA) from palmitate. Catalyzes the reduction of the 3-ketoacyl-CoA intermediate that is formed in each cycle of fatty acid elongation. VLCFAs serve as precursors for ceramide and sphingolipids. This is Very-long-chain 3-oxoacyl-CoA reductase from Podospora anserina (strain S / ATCC MYA-4624 / DSM 980 / FGSC 10383) (Pleurage anserina).